We begin with the raw amino-acid sequence, 247 residues long: Ribosomal RNA large subunit methyltransferase E (247 aa).

G99, W101, D123, D139, and D162 together coordinate S-adenosyl-L-methionine. K202 serves as the catalytic Proton acceptor.

Belongs to the class I-like SAM-binding methyltransferase superfamily. RNA methyltransferase RlmE family.

It is found in the cytoplasm. It carries out the reaction uridine(2552) in 23S rRNA + S-adenosyl-L-methionine = 2'-O-methyluridine(2552) in 23S rRNA + S-adenosyl-L-homocysteine + H(+). Specifically methylates the uridine in position 2552 of 23S rRNA at the 2'-O position of the ribose in the fully assembled 50S ribosomal subunit. This chain is Ribosomal RNA large subunit methyltransferase E, found in Anaplasma phagocytophilum (strain HZ).